A 213-amino-acid chain; its full sequence is Peptidyl-tRNA hydrolase (213 aa).

Tyr26 lines the tRNA pocket. The active-site Proton acceptor is the His31. Residues Tyr78, Asn80, and Asn126 each contribute to the tRNA site.

This sequence belongs to the PTH family. In terms of assembly, monomer.

Its subcellular location is the cytoplasm. It carries out the reaction an N-acyl-L-alpha-aminoacyl-tRNA + H2O = an N-acyl-L-amino acid + a tRNA + H(+). Its function is as follows. Hydrolyzes ribosome-free peptidyl-tRNAs (with 1 or more amino acids incorporated), which drop off the ribosome during protein synthesis, or as a result of ribosome stalling. Catalyzes the release of premature peptidyl moieties from peptidyl-tRNA molecules trapped in stalled 50S ribosomal subunits, and thus maintains levels of free tRNAs and 50S ribosomes. In Nostoc punctiforme (strain ATCC 29133 / PCC 73102), this protein is Peptidyl-tRNA hydrolase.